Here is a 354-residue protein sequence, read N- to C-terminus: MSKVQSITRESWILSTFPEWGSWLNEEIEQEQVAPGTFAMWWLGCTGIWLKSEGGTNVCVDFWCGTGKQSHGNPLMKTGHQMQRMAGVKKLQPNLRTTPFVLDPFAIRQIDAVLATHDHNDHIDVNVAAAVMQNCADDVPFIGPQTCVDLWVGWGVPKERCIVVKPGDVVKVKDIEIHALDAFDRTALITLPADQKAAGVLPDGMDVRAVNYLFKTPGGNLYHSGDSHYSNYYAKHGNEHQIDVALGSYGENPRGITDKMTSTDILRMAESLNTKVVIPFHHDIWSNFQADPQEIRVLWEMKKDRLKYGFKPFIWQVGGKFTWPLDKDNFEYHYPRGFDDCFTIEPDLPFKSFL.

Belongs to the UlaG family. It depends on a divalent metal cation as a cofactor.

Its subcellular location is the cytoplasm. The enzyme catalyses L-ascorbate 6-phosphate + H2O = 3-dehydro-L-gulonate 6-phosphate. The protein operates within cofactor degradation; L-ascorbate degradation; D-xylulose 5-phosphate from L-ascorbate: step 1/4. Probably catalyzes the hydrolysis of L-ascorbate-6-P into 3-keto-L-gulonate-6-P. Is essential for L-ascorbate utilization under anaerobic conditions. The polypeptide is Probable L-ascorbate-6-phosphate lactonase UlaG (Salmonella gallinarum (strain 287/91 / NCTC 13346)).